Here is a 955-residue protein sequence, read N- to C-terminus: Leucine--tRNA ligase (955 aa).

The 'HIGH' region motif lies at 51–61 (PYLNGVLHAGH). The 'KMSKS' region motif lies at 647–651 (KLSKS). ATP is bound at residue Lys650.

This sequence belongs to the class-I aminoacyl-tRNA synthetase family.

It is found in the cytoplasm. The catalysed reaction is tRNA(Leu) + L-leucine + ATP = L-leucyl-tRNA(Leu) + AMP + diphosphate. This Methanococcus maripaludis (strain C7 / ATCC BAA-1331) protein is Leucine--tRNA ligase.